A 278-amino-acid chain; its full sequence is Dermonecrotic toxin LlSicTox-alphaIII3ii (278 aa).

The active site involves His-5. Glu-25 and Asp-27 together coordinate Mg(2+). The active-site Nucleophile is His-40. A disulfide bridge links Cys-44 with Cys-50. Residue Asp-84 coordinates Mg(2+).

The protein belongs to the arthropod phospholipase D family. Class I subfamily. Mg(2+) is required as a cofactor. In terms of tissue distribution, expressed by the venom gland.

It localises to the secreted. The catalysed reaction is an N-(acyl)-sphingosylphosphocholine = an N-(acyl)-sphingosyl-1,3-cyclic phosphate + choline. It carries out the reaction an N-(acyl)-sphingosylphosphoethanolamine = an N-(acyl)-sphingosyl-1,3-cyclic phosphate + ethanolamine. The enzyme catalyses a 1-acyl-sn-glycero-3-phosphocholine = a 1-acyl-sn-glycero-2,3-cyclic phosphate + choline. It catalyses the reaction a 1-acyl-sn-glycero-3-phosphoethanolamine = a 1-acyl-sn-glycero-2,3-cyclic phosphate + ethanolamine. Functionally, dermonecrotic toxins cleave the phosphodiester linkage between the phosphate and headgroup of certain phospholipids (sphingolipid and lysolipid substrates), forming an alcohol (often choline) and a cyclic phosphate. This toxin acts on sphingomyelin (SM). It may also act on ceramide phosphoethanolamine (CPE), lysophosphatidylcholine (LPC) and lysophosphatidylethanolamine (LPE), but not on lysophosphatidylserine (LPS), and lysophosphatidylglycerol (LPG). It acts by transphosphatidylation, releasing exclusively cyclic phosphate products as second products. Induces dermonecrosis, hemolysis, increased vascular permeability, edema, inflammatory response, and platelet aggregation. This is Dermonecrotic toxin LlSicTox-alphaIII3ii from Loxosceles laeta (South American recluse spider).